The chain runs to 298 residues: Tyrosine recombinase XerC (298 aa).

The 87-residue stretch at 2–88 folds into the Core-binding (CB) domain; sequence TDLHTDVERY…ALRSFFDWLV (87 aa). The Tyr recombinase domain occupies 109–288; it reads HLPKNIDVDD…DFQHLASVYD (180 aa). Active-site residues include arginine 148, lysine 172, histidine 240, arginine 243, and histidine 266. The O-(3'-phospho-DNA)-tyrosine intermediate role is filled by tyrosine 275.

Belongs to the 'phage' integrase family. XerC subfamily. Forms a cyclic heterotetrameric complex composed of two molecules of XerC and two molecules of XerD, in which XerC interacts with XerD via its C-terminal region, XerD interacts with XerC via its C-terminal region and so on.

It is found in the cytoplasm. With respect to regulation, ftsK may regulate the catalytic switch between XerC and XerD in the heterotetrameric complex during the two steps of the recombination process. Site-specific tyrosine recombinase, which acts by catalyzing the cutting and rejoining of the recombining DNA molecules. Binds cooperatively to specific DNA consensus sequences that are separated from XerD binding sites by a short central region, forming the heterotetrameric XerC-XerD complex that recombines DNA substrates. The complex is essential to convert dimers of the bacterial chromosome into monomers to permit their segregation at cell division. It also contributes to the segregational stability of plasmids. In the complex XerC specifically exchanges the top DNA strands. The polypeptide is Tyrosine recombinase XerC (Escherichia coli O139:H28 (strain E24377A / ETEC)).